We begin with the raw amino-acid sequence, 376 residues long: MSDETTSSPSPAPAKKKQNLGWMEWMRGWSSVFGEILFQRITASHLENPLPLPSVNDLTCVVTGSTSGIGRETARQLAEAGAHVVMAVRNTKAAQELILQWQNEWSGKGLPLNIEAMEIDLLSLDSVARFAEAFNARLGPLHVLINNAGMFAMGEAQKFSEEGYEQHMQVNHLAPALLSVLLLPSLIRGSPSRIINVNSVMHSVGFVDPDDMNVVSGRRKYSSLIGYSSSKLAQIMFSSILFKKLPLETGVSVVCLSPGVVLTNVARDLSRILQALYAVIPYFIFSPQEGCRSSLFSATDPQIPEYWETLKNDDWPVCPFISQDCRPANPSEEAHNTETAQRVWKKTLELVGLPLDAVEKLIEGENIQCRYGAQHE.

At Ser-2 the chain carries N-acetylserine. 61–85 (VVTGSTSGIGRETARQLAEAGAHVV) contributes to the NAD(+) binding site. Ser-199 contacts substrate. The Proton acceptor role is filled by Tyr-227.

This sequence belongs to the short-chain dehydrogenases/reductases (SDR) family. In terms of tissue distribution, expressed in roots, stems, leaves and flowers and, at lower levels, in siliques.

In terms of biological role, putative oxidoreductase. Required for vegetative shoot apex development, especially during leaf positioning and for shoot apical meristem (SAM) maintenance. This Arabidopsis thaliana (Mouse-ear cress) protein is Dehydrogenase/reductase SDR family member FEY.